Consider the following 343-residue polypeptide: N-acetyl-gamma-glutamyl-phosphate reductase (343 aa).

Residue Cys-148 is part of the active site.

The protein belongs to the NAGSA dehydrogenase family. Type 1 subfamily.

It localises to the cytoplasm. The catalysed reaction is N-acetyl-L-glutamate 5-semialdehyde + phosphate + NADP(+) = N-acetyl-L-glutamyl 5-phosphate + NADPH + H(+). The protein operates within amino-acid biosynthesis; L-arginine biosynthesis; N(2)-acetyl-L-ornithine from L-glutamate: step 3/4. Its function is as follows. Catalyzes the NADPH-dependent reduction of N-acetyl-5-glutamyl phosphate to yield N-acetyl-L-glutamate 5-semialdehyde. In Caldicellulosiruptor saccharolyticus (strain ATCC 43494 / DSM 8903 / Tp8T 6331), this protein is N-acetyl-gamma-glutamyl-phosphate reductase.